A 500-amino-acid chain; its full sequence is Nuclear distribution protein PAC1 (500 aa).

7 WD repeats span residues 125-164 (HNGH…EPQQ), 169-219 (AHTR…NLKA), 225-265 (GHEN…IVLS), 268-310 (GHSN…LMIG), 338-378 (QNEL…IRSD), 397-436 (EHKS…ESNL), and 459-500 (IKDQ…EYIL).

The protein belongs to the WD repeat LIS1/nudF family. As to quaternary structure, self-associates. Interacts with NDL1 and dynein.

It localises to the cytoplasm. The protein resides in the cytoskeleton. The protein localises to the spindle pole. In terms of biological role, positively regulates the activity of the minus-end directed microtubule motor protein dynein. Plays a central role in positioning the mitotic spindle at the bud neck during cell division. Targets cytoplasmic dynein to microtubule plus ends, thereby promoting dynein-mediated microtubule sliding along the bud cortex and consequently the movement of the mitotic spindle to the bud neck. The polypeptide is Nuclear distribution protein PAC1 (Komagataella phaffii (strain GS115 / ATCC 20864) (Yeast)).